The primary structure comprises 117 residues: Ribosome-binding factor A (117 aa).

Belongs to the RbfA family. As to quaternary structure, monomer. Binds 30S ribosomal subunits, but not 50S ribosomal subunits or 70S ribosomes.

The protein resides in the cytoplasm. Functionally, one of several proteins that assist in the late maturation steps of the functional core of the 30S ribosomal subunit. Associates with free 30S ribosomal subunits (but not with 30S subunits that are part of 70S ribosomes or polysomes). Required for efficient processing of 16S rRNA. May interact with the 5'-terminal helix region of 16S rRNA. This chain is Ribosome-binding factor A, found in Leptospira borgpetersenii serovar Hardjo-bovis (strain JB197).